Reading from the N-terminus, the 423-residue chain is UBX domain-containing protein 1 (423 aa).

The disordered stretch occupies residues 44 to 167 (QTDDQKDRRE…EVTDPSDPNS (124 aa)). Residues 46–66 (DDQKDRREEAHWNRQQEKALK) show a composition bias toward basic and acidic residues. Positions 69 to 79 (AFSTNSSNKAI) are enriched in polar residues. A compositionally biased stretch (low complexity) spans 115 to 130 (SSRSGSGNNSRFMSFS). 3 positions are modified to phosphoserine: Ser-128, Ser-210, and Ser-224. The SEP domain maps to 232–297 (KVTREITFWK…VYKKLDESYK (66 aa)). A Glycyl lysine isopeptide (Lys-Gly) (interchain with G-Cter in ubiquitin) cross-link involves residue Lys-241. Positions 299–348 (PTRKLGGFSGQGQRLGSPIPGESSPAEVPKNETPAAQEQPMPDNEPKQGD) are disordered. Ser-315, Ser-321, and Ser-322 each carry phosphoserine. Thr-331 is modified (phosphothreonine). A UBX domain is found at 344 to 421 (PKQGDTSIQI…DLLNSVVVQR (78 aa)).

In terms of assembly, forms a complex composed of CDC48, NPL4, UFD1, DOA1, SHP1 and deubiquitinase OTU1. Interacts with CDC48.

The protein resides in the nucleus. It localises to the cytoplasm. Functionally, involved in CDC48-dependent protein degradation through the ubiquitin/proteasome pathway. Direct or indirect positive regulator of GLC7 activity. The protein is UBX domain-containing protein 1 (SHP1) of Saccharomyces cerevisiae (strain ATCC 204508 / S288c) (Baker's yeast).